We begin with the raw amino-acid sequence, 448 residues long: Methylenetetrahydrofolate--tRNA-(uracil-5-)-methyltransferase TrmFO (448 aa).

Glycine 13–glycine 18 serves as a coordination point for FAD.

Belongs to the MnmG family. TrmFO subfamily. FAD serves as cofactor.

Its subcellular location is the cytoplasm. It catalyses the reaction uridine(54) in tRNA + (6R)-5,10-methylene-5,6,7,8-tetrahydrofolate + NADH + H(+) = 5-methyluridine(54) in tRNA + (6S)-5,6,7,8-tetrahydrofolate + NAD(+). It carries out the reaction uridine(54) in tRNA + (6R)-5,10-methylene-5,6,7,8-tetrahydrofolate + NADPH + H(+) = 5-methyluridine(54) in tRNA + (6S)-5,6,7,8-tetrahydrofolate + NADP(+). Its function is as follows. Catalyzes the folate-dependent formation of 5-methyl-uridine at position 54 (M-5-U54) in all tRNAs. This chain is Methylenetetrahydrofolate--tRNA-(uracil-5-)-methyltransferase TrmFO, found in Streptococcus pyogenes serotype M2 (strain MGAS10270).